Here is a 573-residue protein sequence, read N- to C-terminus: DEAD-box ATP-dependent RNA helicase 47A (573 aa).

Residues 131 to 159 (KSFEELGLPPLLIDRLNKEGLTAPTEVQS) carry the Q motif motif. Positions 162–362 (IPIISQKHDA…RSWGHDPVLV (201 aa)) constitute a Helicase ATP-binding domain. Residue 175–182 (SYTGSGKT) coordinates ATP. Residues 293 to 296 (DEVD) carry the DEAD box motif. One can recognise a Helicase C-terminal domain in the interval 421-565 (TLRRCIHALE…PCEFTEGKLL (145 aa)).

Belongs to the DEAD box helicase family.

The catalysed reaction is ATP + H2O = ADP + phosphate + H(+). This Oryza sativa subsp. japonica (Rice) protein is DEAD-box ATP-dependent RNA helicase 47A.